A 1116-amino-acid chain; its full sequence is Protein STICHEL-like 1 (1116 aa).

2 disordered regions span residues 95-138 (RTSS…LEET) and 225-244 (KFLR…NSTP). Positions 115-124 (NDDDDDDDDV) are enriched in acidic residues. 2 short sequence motifs (PEST) span residues 257–282 (RNPS…FKGR) and 402–422 (KSQD…ESIQ). 463 to 470 (GPRGTGKT) contributes to the ATP binding site. C482, C492, C495, and C498 together coordinate Zn(2+). Positions 726–760 (EAFLDRRNLTEADLERLKHALKLLSEAEKQLRVST) form a coiled coil. A disordered region spans residues 777 to 798 (PSPGTTHTGSSRRQSSRATEES). A compositionally biased stretch (polar residues) spans 778-793 (SPGTTHTGSSRRQSSR).

The protein belongs to the DnaX/STICHEL family.

This is Protein STICHEL-like 1 from Arabidopsis thaliana (Mouse-ear cress).